Reading from the N-terminus, the 167-residue chain is uncharacterized protein (167 aa).

This is an uncharacterized protein from Homo sapiens (Human).